The sequence spans 734 residues: Photosystem I P700 chlorophyll a apoprotein A2 (734 aa).

The next 8 helical transmembrane spans lie at 46 to 69 (IFAS…FHVA), 135 to 158 (LYTG…LHLQ), 175 to 199 (LNHH…HVAI), 273 to 291 (IAHH…GHMY), 330 to 353 (IHFQ…QHMY), 369 to 395 (AALY…IFFI), 417 to 439 (AIIS…LYVH), and 517 to 535 (FLVH…LILV). Positions 559 and 568 each coordinate [4Fe-4S] cluster. Helical transmembrane passes span 575-596 (AFYL…YWHW) and 643-665 (LSVW…MFLI). Positions 654, 662, and 670 each coordinate chlorophyll a. Tryptophan 671 serves as a coordination point for phylloquinone. A helical transmembrane segment spans residues 707–727 (LVGLAHFSVGYIFTYAAFLIA).

Belongs to the PsaA/PsaB family. As to quaternary structure, the PsaA/B heterodimer binds the P700 chlorophyll special pair and subsequent electron acceptors. PSI consists of a core antenna complex that captures photons, and an electron transfer chain that converts photonic excitation into a charge separation. The eukaryotic PSI reaction center is composed of at least 11 subunits. The cofactor is P700 is a chlorophyll a/chlorophyll a' dimer, A0 is one or more chlorophyll a, A1 is one or both phylloquinones and FX is a shared 4Fe-4S iron-sulfur center..

It is found in the plastid. It localises to the chloroplast thylakoid membrane. The catalysed reaction is reduced [plastocyanin] + hnu + oxidized [2Fe-2S]-[ferredoxin] = oxidized [plastocyanin] + reduced [2Fe-2S]-[ferredoxin]. In terms of biological role, psaA and PsaB bind P700, the primary electron donor of photosystem I (PSI), as well as the electron acceptors A0, A1 and FX. PSI is a plastocyanin-ferredoxin oxidoreductase, converting photonic excitation into a charge separation, which transfers an electron from the donor P700 chlorophyll pair to the spectroscopically characterized acceptors A0, A1, FX, FA and FB in turn. Oxidized P700 is reduced on the lumenal side of the thylakoid membrane by plastocyanin. The polypeptide is Photosystem I P700 chlorophyll a apoprotein A2 (Vitis vinifera (Grape)).